Here is a 129-residue protein sequence, read N- to C-terminus: Large ribosomal subunit protein eL32 (129 aa).

This sequence belongs to the eukaryotic ribosomal protein eL32 family.

The protein is Large ribosomal subunit protein eL32 (rpl32e) of Methanosarcina mazei (strain ATCC BAA-159 / DSM 3647 / Goe1 / Go1 / JCM 11833 / OCM 88) (Methanosarcina frisia).